The primary structure comprises 209 residues: uncharacterized protein (209 aa).

Residues M1–L199 enclose the FCP1 homology domain.

This is an uncharacterized protein from Dryophytes versicolor (chameleon treefrog).